The chain runs to 107 residues: Translation initiation factor IF-1, chloroplastic (107 aa).

An S1-like domain is found at 8–83 (REKKNPREAK…SKGRIIYRLP (76 aa)). Residues 81-107 (RLPHKDSKRTEDSKDTEDLKDTKDSKD) form a disordered region. The span at 83-107 (PHKDSKRTEDSKDTEDLKDTKDSKD) shows a compositional bias: basic and acidic residues.

Belongs to the IF-1 family. In terms of assembly, component of the 30S ribosomal translation pre-initiation complex which assembles on the 30S ribosome in the order IF-2 and IF-3, IF-1 and N-formylmethionyl-tRNA(fMet); mRNA recruitment can occur at any time during PIC assembly.

Its subcellular location is the plastid. It is found in the chloroplast. One of the essential components for the initiation of protein synthesis. Stabilizes the binding of IF-2 and IF-3 on the 30S subunit to which N-formylmethionyl-tRNA(fMet) subsequently binds. Helps modulate mRNA selection, yielding the 30S pre-initiation complex (PIC). Upon addition of the 50S ribosomal subunit IF-1, IF-2 and IF-3 are released leaving the mature 70S translation initiation complex. This is Translation initiation factor IF-1, chloroplastic from Saccharum hybrid (Sugarcane).